A 211-amino-acid polypeptide reads, in one-letter code: Protein-L-isoaspartate O-methyltransferase (211 aa).

The active site involves Ser-62.

It belongs to the methyltransferase superfamily. L-isoaspartyl/D-aspartyl protein methyltransferase family.

Its subcellular location is the cytoplasm. It catalyses the reaction [protein]-L-isoaspartate + S-adenosyl-L-methionine = [protein]-L-isoaspartate alpha-methyl ester + S-adenosyl-L-homocysteine. In terms of biological role, catalyzes the methyl esterification of L-isoaspartyl residues in peptides and proteins that result from spontaneous decomposition of normal L-aspartyl and L-asparaginyl residues. It plays a role in the repair and/or degradation of damaged proteins. This chain is Protein-L-isoaspartate O-methyltransferase, found in Shewanella woodyi (strain ATCC 51908 / MS32).